The sequence spans 553 residues: MRSDTITQGLERTPHRALLKGTGLPQSEMGKPFIGIATSFTDLIPGHVGMRDLERFIEKGVHTGGGYSFFFGIPGVCDGISMGHKGMHYSLPTRELIADMVESVAEAHRLDGLVLLTNCDKITPGMLMAAARLDIPCIVVTAGPMMSGRGDAGRKYSFVTDTFEAMARYKAGVIDDAELARCEENACPGMGSCQGLFTANTMAILTETLGMSLPRCGTALAVSALKRRIAFASGERIVDLVRQNITPRSILTREAFENAIRVDLALGGSSNTVLHLLAIAHEAGVELPLETFDILAKETPQLASMNPAGEHFMEDLDVAGGVAGVLKQLGDKIHDCPTLMGLSTKEIAASLKGVDEEVIHPLSNPVKKEGGIAVLFGNICPKGAVVKQSGVSDKMMKFTGTARCFDSEDKAMAAMMGGVVKGGDVVVIRYEGPKGGPGMREMLAPTAALMGLGLGDSVALITDGRFSGGTRGPCIGHIAPEAAAGGPIGLIEDGDTIELDIPARSLKVMVSDEVLAERRARWVAPEPKIKKGWLARYAKVVTSAHTGAITTAE.

Residue Asp-78 participates in Mg(2+) binding. Cys-119 lines the [2Fe-2S] cluster pocket. Residues Asp-120 and Lys-121 each contribute to the Mg(2+) site. Lys-121 carries the post-translational modification N6-carboxylysine. Residue Cys-193 coordinates [2Fe-2S] cluster. Residue Glu-441 coordinates Mg(2+). Ser-467 (proton acceptor) is an active-site residue.

This sequence belongs to the IlvD/Edd family. Homodimer. It depends on [2Fe-2S] cluster as a cofactor. Mg(2+) serves as cofactor.

The enzyme catalyses (2R)-2,3-dihydroxy-3-methylbutanoate = 3-methyl-2-oxobutanoate + H2O. The catalysed reaction is (2R,3R)-2,3-dihydroxy-3-methylpentanoate = (S)-3-methyl-2-oxopentanoate + H2O. It participates in amino-acid biosynthesis; L-isoleucine biosynthesis; L-isoleucine from 2-oxobutanoate: step 3/4. Its pathway is amino-acid biosynthesis; L-valine biosynthesis; L-valine from pyruvate: step 3/4. In terms of biological role, functions in the biosynthesis of branched-chain amino acids. Catalyzes the dehydration of (2R,3R)-2,3-dihydroxy-3-methylpentanoate (2,3-dihydroxy-3-methylvalerate) into 2-oxo-3-methylpentanoate (2-oxo-3-methylvalerate) and of (2R)-2,3-dihydroxy-3-methylbutanoate (2,3-dihydroxyisovalerate) into 2-oxo-3-methylbutanoate (2-oxoisovalerate), the penultimate precursor to L-isoleucine and L-valine, respectively. The polypeptide is Dihydroxy-acid dehydratase (Citrifermentans bemidjiense (strain ATCC BAA-1014 / DSM 16622 / JCM 12645 / Bem) (Geobacter bemidjiensis)).